The chain runs to 140 residues: Ribonuclease P protein subunit p20 (140 aa).

Belongs to the histone-like Alba family. As to quaternary structure, component of nuclear RNase P and RNase MRP complexes. RNase P consists of a catalytic RNA moiety and 10 different protein chains; POP1, POP4, POP5, POP7, RPP14, RPP21, RPP25, RPP30, RPP38 and RPP40. Within the RNase P complex, POP1, POP7 and RPP25 form the 'finger' subcomplex, POP5, RPP14, RPP40 and homodimeric RPP30 form the 'palm' subcomplex, and RPP21, POP4 and RPP38 form the 'wrist' subcomplex. All subunits of the RNase P complex interact with the catalytic RNA. Several subunits of RNase P are also part of the RNase MRP complex. RNase MRP consists of a catalytic RNA moiety and about 8 protein subunits; POP1, POP7, RPP25, RPP30, RPP38, RPP40 and possibly also POP4 and POP5. Interacts with SMN1. POP7 forms a heterodimer with RPP25 that binds to the P3 stem loop of the catalytic RNA.

It is found in the nucleus. Its subcellular location is the nucleolus. The protein resides in the cytoplasm. The protein localises to the cytoplasmic granule. Component of ribonuclease P, a ribonucleoprotein complex that generates mature tRNA molecules by cleaving their 5'-ends. Also a component of the MRP ribonuclease complex, which cleaves pre-rRNA sequences. The sequence is that of Ribonuclease P protein subunit p20 (Pop7) from Mus musculus (Mouse).